Here is a 97-residue protein sequence, read N- to C-terminus: Aspartyl/glutamyl-tRNA(Asn/Gln) amidotransferase subunit C (97 aa).

The protein belongs to the GatC family. In terms of assembly, heterotrimer of A, B and C subunits.

The enzyme catalyses L-glutamyl-tRNA(Gln) + L-glutamine + ATP + H2O = L-glutaminyl-tRNA(Gln) + L-glutamate + ADP + phosphate + H(+). It catalyses the reaction L-aspartyl-tRNA(Asn) + L-glutamine + ATP + H2O = L-asparaginyl-tRNA(Asn) + L-glutamate + ADP + phosphate + 2 H(+). Allows the formation of correctly charged Asn-tRNA(Asn) or Gln-tRNA(Gln) through the transamidation of misacylated Asp-tRNA(Asn) or Glu-tRNA(Gln) in organisms which lack either or both of asparaginyl-tRNA or glutaminyl-tRNA synthetases. The reaction takes place in the presence of glutamine and ATP through an activated phospho-Asp-tRNA(Asn) or phospho-Glu-tRNA(Gln). The chain is Aspartyl/glutamyl-tRNA(Asn/Gln) amidotransferase subunit C from Roseiflexus sp. (strain RS-1).